Here is a 60-residue protein sequence, read N- to C-terminus: Homeobox protein engrailed-like (60 aa).

A DNA-binding region (homeobox) is located at residues 1-41; that stretch reads GEQLCRLRAEFQASRYLTEERRTALARELRLNEAQIKIWFQ.

The protein belongs to the engrailed homeobox family.

The protein resides in the nucleus. This Lampetra planeri (Brook lamprey) protein is Homeobox protein engrailed-like.